The chain runs to 292 residues: Phosphatidylserine decarboxylase proenzyme (292 aa).

Catalysis depends on charge relay system; for autoendoproteolytic cleavage activity residues Asp-89, His-146, and Ser-252. Ser-252 serves as the catalytic Schiff-base intermediate with substrate; via pyruvic acid; for decarboxylase activity. Pyruvic acid (Ser); by autocatalysis is present on Ser-252.

The protein belongs to the phosphatidylserine decarboxylase family. PSD-B subfamily. Prokaryotic type I sub-subfamily. As to quaternary structure, heterodimer of a large membrane-associated beta subunit and a small pyruvoyl-containing alpha subunit. Pyruvate serves as cofactor. Is synthesized initially as an inactive proenzyme. Formation of the active enzyme involves a self-maturation process in which the active site pyruvoyl group is generated from an internal serine residue via an autocatalytic post-translational modification. Two non-identical subunits are generated from the proenzyme in this reaction, and the pyruvate is formed at the N-terminus of the alpha chain, which is derived from the carboxyl end of the proenzyme. The autoendoproteolytic cleavage occurs by a canonical serine protease mechanism, in which the side chain hydroxyl group of the serine supplies its oxygen atom to form the C-terminus of the beta chain, while the remainder of the serine residue undergoes an oxidative deamination to produce ammonia and the pyruvoyl prosthetic group on the alpha chain. During this reaction, the Ser that is part of the protease active site of the proenzyme becomes the pyruvoyl prosthetic group, which constitutes an essential element of the active site of the mature decarboxylase.

It localises to the cell membrane. It carries out the reaction a 1,2-diacyl-sn-glycero-3-phospho-L-serine + H(+) = a 1,2-diacyl-sn-glycero-3-phosphoethanolamine + CO2. Its pathway is phospholipid metabolism; phosphatidylethanolamine biosynthesis; phosphatidylethanolamine from CDP-diacylglycerol: step 2/2. Functionally, catalyzes the formation of phosphatidylethanolamine (PtdEtn) from phosphatidylserine (PtdSer). In Shewanella sp. (strain ANA-3), this protein is Phosphatidylserine decarboxylase proenzyme.